The following is a 77-amino-acid chain: Putative defensin-like protein 160 (77 aa).

The N-terminal stretch at Met-1–Cys-24 is a signal peptide. 4 cysteine pairs are disulfide-bonded: Cys-30-Cys-77, Cys-40-Cys-59, Cys-45-Cys-71, and Cys-49-Cys-73.

The protein belongs to the DEFL family.

Its subcellular location is the secreted. This chain is Putative defensin-like protein 160 (LCR26), found in Arabidopsis thaliana (Mouse-ear cress).